The following is a 319-amino-acid chain: Phosphoenolpyruvate transferase (319 aa).

Residue Asp-50 coordinates 7,8-didemethyl-8-hydroxy-5-deazariboflavin.

This sequence belongs to the CofD family. Homodimer. Mg(2+) is required as a cofactor.

It carries out the reaction enolpyruvoyl-2-diphospho-5'-guanosine + 7,8-didemethyl-8-hydroxy-5-deazariboflavin = dehydro coenzyme F420-0 + GMP + H(+). It functions in the pathway cofactor biosynthesis; coenzyme F420 biosynthesis. Catalyzes the transfer of the phosphoenolpyruvate moiety from enoylpyruvoyl-2-diphospho-5'-guanosine (EPPG) to 7,8-didemethyl-8-hydroxy-5-deazariboflavin (FO) with the formation of dehydro coenzyme F420-0 and GMP. In Streptomyces coelicolor (strain ATCC BAA-471 / A3(2) / M145), this protein is Phosphoenolpyruvate transferase.